Here is an 861-residue protein sequence, read N- to C-terminus: DNA mismatch repair protein MutS (861 aa).

618–625 is an ATP binding site; it reads GPNMGGKS.

Belongs to the DNA mismatch repair MutS family.

In terms of biological role, this protein is involved in the repair of mismatches in DNA. It is possible that it carries out the mismatch recognition step. This protein has a weak ATPase activity. This Shewanella sp. (strain MR-4) protein is DNA mismatch repair protein MutS.